The following is a 276-amino-acid chain: Putative serine/threonine-protein kinase R436 (276 aa).

One can recognise a Protein kinase domain in the interval 6–266 (YSLDKLIQNR…IKQKLNHFKT (261 aa)). ATP contacts are provided by residues 12-20 (IQNRKSKRI) and K35. Catalysis depends on D132, which acts as the Proton acceptor.

This sequence belongs to the protein kinase superfamily. Ser/Thr protein kinase family.

It carries out the reaction L-seryl-[protein] + ATP = O-phospho-L-seryl-[protein] + ADP + H(+). It catalyses the reaction L-threonyl-[protein] + ATP = O-phospho-L-threonyl-[protein] + ADP + H(+). This Acanthamoeba polyphaga (Amoeba) protein is Putative serine/threonine-protein kinase R436.